The chain runs to 571 residues: Proline--tRNA ligase (571 aa).

The protein belongs to the class-II aminoacyl-tRNA synthetase family. ProS type 1 subfamily. In terms of assembly, homodimer.

It localises to the cytoplasm. The catalysed reaction is tRNA(Pro) + L-proline + ATP = L-prolyl-tRNA(Pro) + AMP + diphosphate. Catalyzes the attachment of proline to tRNA(Pro) in a two-step reaction: proline is first activated by ATP to form Pro-AMP and then transferred to the acceptor end of tRNA(Pro). As ProRS can inadvertently accommodate and process non-cognate amino acids such as alanine and cysteine, to avoid such errors it has two additional distinct editing activities against alanine. One activity is designated as 'pretransfer' editing and involves the tRNA(Pro)-independent hydrolysis of activated Ala-AMP. The other activity is designated 'posttransfer' editing and involves deacylation of mischarged Ala-tRNA(Pro). The misacylated Cys-tRNA(Pro) is not edited by ProRS. This chain is Proline--tRNA ligase, found in Pseudomonas aeruginosa (strain UCBPP-PA14).